The primary structure comprises 364 residues: Dihydroorotate dehydrogenase (quinone) (364 aa).

FMN-binding positions include Ala61–Lys65 and Thr85. Lys65 is a binding site for substrate. Asn110–Phe114 is a substrate binding site. Positions 139 and 170 each coordinate FMN. Asn170 lines the substrate pocket. Residue Ser173 is the Nucleophile of the active site. Substrate is bound at residue Asn175. FMN contacts are provided by Lys214 and Ala242. Substrate is bound at residue Asn243 to Thr244. Residues Gly266, Gly295, and Tyr316–Ser317 each bind FMN.

It belongs to the dihydroorotate dehydrogenase family. Type 2 subfamily. In terms of assembly, monomer. FMN is required as a cofactor.

The protein resides in the cell membrane. It carries out the reaction (S)-dihydroorotate + a quinone = orotate + a quinol. It functions in the pathway pyrimidine metabolism; UMP biosynthesis via de novo pathway; orotate from (S)-dihydroorotate (quinone route): step 1/1. In terms of biological role, catalyzes the conversion of dihydroorotate to orotate with quinone as electron acceptor. This chain is Dihydroorotate dehydrogenase (quinone), found in Rhodopseudomonas palustris (strain HaA2).